The primary structure comprises 376 residues: Growth/differentiation factor 8 (376 aa).

Residues 1–24 form the signal peptide; that stretch reads MMQKLQMYVYIYLFMLIAAGPVDL. The propeptide occupies 25-267; sequence NEGSEREENV…VTDTPKRSRR (243 aa). A glycan (N-linked (GlcNAc...) asparagine) is linked at Asn-72. Disulfide bonds link Cys-273–Cys-283, Cys-282–Cys-341, Cys-310–Cys-373, and Cys-314–Cys-375.

It belongs to the TGF-beta family. In terms of assembly, homodimer; disulfide-linked. Interacts with WFIKKN2, leading to inhibit its activity. Interacts with FSTL3. Post-translationally, synthesized as large precursor molecule that undergoes proteolytic cleavage to generate an N-terminal propeptide and a disulfide linked C-terminal dimer, which is the biologically active molecule. The circulating form consists of a latent complex of the C-terminal dimer and other proteins, including its propeptide, which maintain the C-terminal dimer in a latent, inactive state. Ligand activation requires additional cleavage of the prodomain by a tolloid-like metalloproteinase. As to expression, expressed specifically in developing and adult skeletal muscle. Weak expression in adipose tissue.

The protein resides in the secreted. In terms of biological role, acts specifically as a negative regulator of skeletal muscle growth. The protein is Growth/differentiation factor 8 (Mstn) of Mus musculus (Mouse).